A 283-amino-acid polypeptide reads, in one-letter code: Protease HtpX homolog (283 aa).

2 consecutive transmembrane segments (helical) span residues 7-27 (TAVL…VLGG) and 29-49 (QGMA…YWFS). Zn(2+) is bound at residue His131. The active site involves Glu132. A Zn(2+)-binding site is contributed by His135. A run of 2 helical transmembrane segments spans residues 146–166 (ISAT…FFGG) and 177–197 (IAGI…QMAI). Residue Glu202 coordinates Zn(2+).

This sequence belongs to the peptidase M48B family. Requires Zn(2+) as cofactor.

The protein localises to the cell inner membrane. This Methylibium petroleiphilum (strain ATCC BAA-1232 / LMG 22953 / PM1) protein is Protease HtpX homolog.